The chain runs to 131 residues: Profilin-1 (131 aa).

The protein belongs to the profilin family. As to quaternary structure, occurs in many kinds of cells as a complex with monomeric actin in a 1:1 ratio.

Its subcellular location is the cytoplasm. The protein resides in the cytoskeleton. Binds to actin and affects the structure of the cytoskeleton. At high concentrations, profilin prevents the polymerization of actin, whereas it enhances it at low concentrations. By binding to PIP2, it inhibits the formation of IP3 and DG. This is Profilin-1 from Malus domestica (Apple).